The following is a 275-amino-acid chain: Large ribosomal subunit protein uL2 (275 aa).

The interval 221–275 (RGSAMTPRDHPHGGGEGKAPRGMPPKTPWGKPALGKRTRRNKKSDRFIIRRRYEA) is disordered. Residues 227–239 (PRDHPHGGGEGKA) are compositionally biased toward basic and acidic residues. A compositionally biased stretch (basic residues) spans 254-263 (LGKRTRRNKK). A compositionally biased stretch (basic and acidic residues) spans 264 to 275 (SDRFIIRRRYEA).

Belongs to the universal ribosomal protein uL2 family. In terms of assembly, part of the 50S ribosomal subunit. Forms a bridge to the 30S subunit in the 70S ribosome.

Functionally, one of the primary rRNA binding proteins. Required for association of the 30S and 50S subunits to form the 70S ribosome, for tRNA binding and peptide bond formation. It has been suggested to have peptidyltransferase activity; this is somewhat controversial. Makes several contacts with the 16S rRNA in the 70S ribosome. This is Large ribosomal subunit protein uL2 from Thermomicrobium roseum (strain ATCC 27502 / DSM 5159 / P-2).